The primary structure comprises 400 residues: Cytochrome b (400 aa).

The helical transmembrane segment at 47–67 (LGSIAGIALVIQIITGVILAM) threads the bilayer. Heme b is bound by residues H97 and H111. The next 8 helical transmembrane spans lie at 98 to 118 (AVGA…GLYY), 131 to 151 (IGII…VLPW), 166 to 186 (FSAI…GFSV), 194 to 214 (FFSL…LHLV), 247 to 267 (FVGF…EPNY), 306 to 326 (LGGV…PWLD), 341 to 361 (IAFW…GQPA), and 368 to 388 (ISRF…PLIG). Heme b is bound by residues H198 and H212.

Belongs to the cytochrome b family. The main subunits of complex b-c1 are: cytochrome b, cytochrome c1 and the Rieske protein. Heme b serves as cofactor.

It localises to the cell membrane. Its function is as follows. Component of the ubiquinol-cytochrome c reductase complex (complex III or cytochrome b-c1 complex), which is a respiratory chain that generates an electrochemical potential coupled to ATP synthesis. The polypeptide is Cytochrome b (petB) (Rickettsia bellii (strain RML369-C)).